A 97-amino-acid chain; its full sequence is Phosphoribosyl-ATP pyrophosphatase (97 aa).

The protein belongs to the PRA-PH family.

The protein localises to the cytoplasm. The catalysed reaction is 1-(5-phospho-beta-D-ribosyl)-ATP + H2O = 1-(5-phospho-beta-D-ribosyl)-5'-AMP + diphosphate + H(+). It functions in the pathway amino-acid biosynthesis; L-histidine biosynthesis; L-histidine from 5-phospho-alpha-D-ribose 1-diphosphate: step 2/9. The chain is Phosphoribosyl-ATP pyrophosphatase from Methanoculleus marisnigri (strain ATCC 35101 / DSM 1498 / JR1).